The chain runs to 404 residues: Tryptophan synthase beta chain (404 aa).

Lys-98 is modified (N6-(pyridoxal phosphate)lysine).

Belongs to the TrpB family. As to quaternary structure, tetramer of two alpha and two beta chains. It depends on pyridoxal 5'-phosphate as a cofactor.

The enzyme catalyses (1S,2R)-1-C-(indol-3-yl)glycerol 3-phosphate + L-serine = D-glyceraldehyde 3-phosphate + L-tryptophan + H2O. It participates in amino-acid biosynthesis; L-tryptophan biosynthesis; L-tryptophan from chorismate: step 5/5. Functionally, the beta subunit is responsible for the synthesis of L-tryptophan from indole and L-serine. The polypeptide is Tryptophan synthase beta chain (Rhodopseudomonas palustris (strain HaA2)).